A 115-amino-acid polypeptide reads, in one-letter code: MNIQCKRVYDPAEQSDGYRILVDRLWPRGIKKTDLALDEWDKEITPSTELRKAFHGEVVDYATFREQYLAELAQHEQEGKRLADIAKKQPLTLLYSAKNTTQNHALVLADWLRSL.

To M.tuberculosis Rv3073c.

This is an uncharacterized protein from Escherichia coli (strain K12).